The primary structure comprises 776 residues: Microtubule-associated protein tau (776 aa).

A compositionally biased stretch (basic and acidic residues) spans 1 to 26 (MAEPRQEFDVMEDHAGTYGLGDRKDQ). The tract at residues 1–591 (MAEPRQEFDV…PVPMPDLKNV (591 aa)) is disordered. Ala2 bears the N-acetylalanine mark. Phosphotyrosine is present on residues Tyr18 and Tyr29. Lys44 participates in a covalent cross-link: Glycyl lysine isopeptide (Lys-Gly) (interchain with G-Cter in ubiquitin). A phosphoserine mark is found at Ser46 and Ser61. Residues 61-71 (SETSDAKSTPT) are compositionally biased toward polar residues. 3 positions are modified to phosphothreonine: Thr69, Thr71, and Thr111. Basic and acidic residues-rich tracts occupy residues 179–189 (EGGRHAPELLK) and 207–216 (GGKERPGIKE). Acidic residues predominate over residues 217-228 (EVDEDRDVDESS). The span at 314–323 (EQAHSEEHLG) shows a compositional bias: basic and acidic residues. Residues 325–340 (AAFPGAPGEGPEAQGP) show a composition bias toward low complexity. Composition is skewed to basic and acidic residues over residues 344–356 (EDTK…EPSE) and 381–393 (KSKD…DKKA). Residues 442–453 (VSSVTXRTGSSG) are compositionally biased toward low complexity. The span at 455-466 (KEMKLKGADGKT) shows a compositional bias: basic and acidic residues. A Phosphothreonine modification is found at Thr470. Position 472 is an omega-N-methylarginine (Arg472). An N6,N6-dimethyllysine; alternate modification is found at Lys480. Residue Lys480 is modified to N6-acetyllysine; alternate. Phosphothreonine is present on residues Thr486, Thr492, and Thr498. 3 positions are modified to phosphoserine: Ser502, Ser526, and Ser530. The segment covering 517-528 (KSERGEPPKSGD) has biased composition (basic and acidic residues). The span at 529–549 (RSGYSSPGSPGTPGSRSRTPS) shows a compositional bias: low complexity. The residue at position 532 (Tyr532) is a Phosphotyrosine. Phosphoserine occurs at positions 533, 534, and 537. A phosphothreonine mark is found at Thr540 and Thr547. Ser549 carries the post-translational modification Phosphoserine. Thr552 carries the phosphothreonine modification. N6-acetyllysine is present on Lys560. Thr566 is modified (phosphothreonine). Ser570 and Ser572 each carry phosphoserine. Tau/MAP repeat units lie at residues 579–609 (QTAP…GGGK), 610–640 (VQII…GGGS), 641–671 (VQIV…GGGQ), and 672–703 (VEVK…GGGN). Lys589 is covalently cross-linked (Glycyl lysine isopeptide (Lys-Gly) (interchain with G-Cter in ubiquitin)). An N6-acetyllysine; alternate modification is found at Lys594. Lys594 carries the N6-methyllysine; alternate modification. Lys594 participates in a covalent cross-link: Glycyl lysine isopeptide (Lys-Gly) (interchain with G-Cter in ubiquitin); alternate. At Ser597 the chain carries Phosphoserine. Lys602 is covalently cross-linked (Glycyl lysine isopeptide (Lys-Gly) (interchain with G-Cter in ubiquitin)). An N6-acetyllysine; alternate modification is found at Lys616. Lys616 is covalently cross-linked (Glycyl lysine isopeptide (Lys-Gly) (interchain with G-Cter in ubiquitin); alternate). Ser620 and Ser624 each carry phosphoserine. Lys625 is subject to N6-acetyllysine. Phosphoserine is present on Ser628. Lys633 carries the N6-acetyllysine; alternate modification. Lys633 participates in a covalent cross-link: Glycyl lysine isopeptide (Lys-Gly) (interchain with G-Cter in ubiquitin); alternate. The residue at position 640 (Ser640) is a Phosphoserine. Lys646 carries the N6,N6-dimethyllysine; alternate modification. 3 positions are modified to N6-acetyllysine; alternate: Lys646, Lys652, and Lys656. Residues Lys646, Lys652, and Lys656 each participate in a glycyl lysine isopeptide (Lys-Gly) (interchain with G-Cter in ubiquitin); alternate cross-link. Ser659 bears the Phosphoserine mark. 3 positions are modified to N6-acetyllysine; alternate: Lys666, Lys678, and Lys682. Residues Lys666, Lys678, and Lys682 each participate in a glycyl lysine isopeptide (Lys-Gly) (interchain with G-Cter in ubiquitin); alternate cross-link. Residue Arg684 is modified to Omega-N-methylarginine. Position 687 is a phosphoserine (Ser687). Lys688 is covalently cross-linked (Glycyl lysine isopeptide (Lys-Gly) (interchain with G-Cter in ubiquitin)). A Phosphoserine modification is found at Ser691. Residue Lys704 is modified to N6-acetyllysine; alternate. A Glycyl lysine isopeptide (Lys-Gly) (interchain with G-Cter in ubiquitin); alternate cross-link involves residue Lys704. Lys710 participates in a covalent cross-link: Glycyl lysine isopeptide (Lys-Gly) (interchain with G-Cter in ubiquitin). At Lys720 the chain carries N6-acetyllysine; alternate. A Glycyl lysine isopeptide (Lys-Gly) (interchain with G-Cter in ubiquitin); alternate cross-link involves residue Lys720. Tyr729 is modified (phosphotyrosine). A phosphoserine mark is found at Ser731 and Ser735. The tract at residues 733–752 (VVSGDTSPRHLSNVSSTGSI) is disordered. Residues 736 to 751 (GDTSPRHLSNVSSTGS) are compositionally biased toward polar residues. A Phosphothreonine modification is found at Thr738. Phosphoserine is present on residues Ser739, Ser744, Ser751, and Ser757. At Thr762 the chain carries Phosphothreonine.

Interacts with MARK1, MARK2, MARK3 and MARK4. Interacts with SQSTM1 when polyubiquitinated. Interacts with PSMC2 through SQSTM1. Interacts with FKBP4. Binds to CSNK1D. Interacts with SGK1. Interacts with EPM2A; the interaction dephosphorylates MAPT at Ser-396. Interacts with PIN1. Interacts with LRRK2. Interacts with LRP1, leading to endocytosis; this interaction is reduced in the presence of LRPAP1/RAP. Post-translationally, polyubiquitinated. Requires functional TRAF6 and may provoke SQSTM1-dependent degradation by the proteasome. In terms of processing, phosphorylation at various serine and threonine residues in S-P or T-P motifs by proline-directed protein kinases (PDPK1, CDK1, CDK5, GSK3, MAPK) (a few sites per protein in interphase, more in mitosis), and at serine residues in K-X-G-S motifs by MAP/microtubule affinity-regulating kinase (MARK1, MARK2, MARK3 or MARK4), causing detachment from microtubules, and their disassembly. Phosphorylation at Ser-597 by BRSK1 and BRSK2 in neurons affects ability to bind microtubules and plays a role in neuron polarization. Phosphorylated by PHK. Dephosphorylation at several serine and threonine residues by the serine/threonine phosphatase PPP5C.

Its subcellular location is the cytoplasm. The protein resides in the cytosol. The protein localises to the cell membrane. It localises to the cytoskeleton. It is found in the cell projection. Its subcellular location is the axon. The protein resides in the dendrite. In terms of biological role, promotes microtubule assembly and stability, and might be involved in the establishment and maintenance of neuronal polarity. The C-terminus binds axonal microtubules while the N-terminus binds neural plasma membrane components, suggesting that tau functions as a linker protein between both. Axonal polarity is predetermined by tau localization (in the neuronal cell) in the domain of the cell body defined by the centrosome. The short isoforms allow plasticity of the cytoskeleton whereas the longer isoforms may preferentially play a role in its stabilization. In Hylobates lar (Lar gibbon), this protein is Microtubule-associated protein tau (MAPT).